The sequence spans 75 residues: uncharacterized protein (75 aa).

The 43-residue stretch at 3–45 (TTVFLSNRSQAVRLPKAVALPENVKRVEVIAVGRTRIITPAGE) folds into the SpoVT-AbrB domain.

Belongs to the VapB family.

This is an uncharacterized protein from Escherichia coli (strain K12).